Reading from the N-terminus, the 502-residue chain is 1-aminocyclopropane-1-carboxylate synthase-like protein 1 (502 aa).

The segment at 1–24 (MFCLPQQESTAPTTCTGSASTQDM) is disordered. Glu106 provides a ligand contact to substrate. Lys324 is modified (N6-(pyridoxal phosphate)lysine).

This sequence belongs to the class-I pyridoxal-phosphate-dependent aminotransferase family.

Functionally, does not catalyze the synthesis of 1-aminocyclopropane-1-carboxylate but is capable of catalyzing the deamination of L-vinylglycine. The sequence is that of 1-aminocyclopropane-1-carboxylate synthase-like protein 1 (Accs) from Mus musculus (Mouse).